The primary structure comprises 229 residues: Cytochrome c oxidase subunit 2 (229 aa).

The Mitochondrial intermembrane portion of the chain corresponds to 1–14; the sequence is MANPTHLGFQDAMS. Residues 15–45 form a helical membrane-spanning segment; that stretch reads PLMEELLYFHDHTLMILFLISSLVFYMIFAL. Over 46-59 the chain is Mitochondrial matrix; sequence LFPKLYYPNTSDVQ. The helical transmembrane segment at 60-87 threads the bilayer; that stretch reads EVEVIWTVLPAIVLISIALPSLRTLYLM. Residues 88 to 229 are Mitochondrial intermembrane-facing; the sequence is DETNNPCLTI…QLWLEDSILS (142 aa). Residues His-161, Cys-196, Glu-198, Cys-200, His-204, and Met-207 each contribute to the Cu cation site. Glu-198 is a binding site for Mg(2+).

Belongs to the cytochrome c oxidase subunit 2 family. In terms of assembly, component of the cytochrome c oxidase (complex IV, CIV), a multisubunit enzyme composed of 14 subunits. The complex is composed of a catalytic core of 3 subunits MT-CO1, MT-CO2 and MT-CO3, encoded in the mitochondrial DNA, and 11 supernumerary subunits COX4I, COX5A, COX5B, COX6A, COX6B, COX6C, COX7A, COX7B, COX7C, COX8 and NDUFA4, which are encoded in the nuclear genome. The complex exists as a monomer or a dimer and forms supercomplexes (SCs) in the inner mitochondrial membrane with NADH-ubiquinone oxidoreductase (complex I, CI) and ubiquinol-cytochrome c oxidoreductase (cytochrome b-c1 complex, complex III, CIII), resulting in different assemblies (supercomplex SCI(1)III(2)IV(1) and megacomplex MCI(2)III(2)IV(2)). Found in a complex with TMEM177, COA6, COX18, COX20, SCO1 and SCO2. Interacts with TMEM177 in a COX20-dependent manner. Interacts with COX20. Interacts with COX16. The cofactor is Cu cation.

The protein resides in the mitochondrion inner membrane. The enzyme catalyses 4 Fe(II)-[cytochrome c] + O2 + 8 H(+)(in) = 4 Fe(III)-[cytochrome c] + 2 H2O + 4 H(+)(out). Component of the cytochrome c oxidase, the last enzyme in the mitochondrial electron transport chain which drives oxidative phosphorylation. The respiratory chain contains 3 multisubunit complexes succinate dehydrogenase (complex II, CII), ubiquinol-cytochrome c oxidoreductase (cytochrome b-c1 complex, complex III, CIII) and cytochrome c oxidase (complex IV, CIV), that cooperate to transfer electrons derived from NADH and succinate to molecular oxygen, creating an electrochemical gradient over the inner membrane that drives transmembrane transport and the ATP synthase. Cytochrome c oxidase is the component of the respiratory chain that catalyzes the reduction of oxygen to water. Electrons originating from reduced cytochrome c in the intermembrane space (IMS) are transferred via the dinuclear copper A center (CU(A)) of subunit 2 and heme A of subunit 1 to the active site in subunit 1, a binuclear center (BNC) formed by heme A3 and copper B (CU(B)). The BNC reduces molecular oxygen to 2 water molecules using 4 electrons from cytochrome c in the IMS and 4 protons from the mitochondrial matrix. The chain is Cytochrome c oxidase subunit 2 (MT-CO2) from Alligator mississippiensis (American alligator).